The primary structure comprises 266 residues: Receptor-like protein 5 (266 aa).

Residues 1-19 form the signal peptide; sequence MINYRHIVFCLCVMVVVDS. At 20–169 the chain is on the extracellular side; the sequence is RLTPYLAAIE…PTRNKNKPTV (150 aa). LRR repeat units follow at residues 93 to 117 and 119 to 143; these read LTSL…ITKL and NLTI…IVIL. An N-linked (GlcNAc...) asparagine glycan is attached at N119. Residues 170–190 traverse the membrane as a helical segment; it reads LVLLLGILVGLVVAGGASFGF. Residues 191–266 are Cytoplasmic-facing; it reads YLYRIRKQPK…TNQNPHLPYM (76 aa).

Belongs to the RLP family.

It is found in the cell membrane. This is Receptor-like protein 5 from Arabidopsis thaliana (Mouse-ear cress).